Reading from the N-terminus, the 816-residue chain is Fibroblast growth factor receptor 1 (816 aa).

Positions 1 to 23 are cleaved as a signal peptide; the sequence is MLSWRHLVFWAMLVMATLSAARP. Over 24 to 374 the chain is Extracellular; sequence APTLPEQVSP…VIMTSPLYLE (351 aa). The region spanning 25–118 is the Ig-like C2-type 1 domain; it reads PTLPEQVSPK…ETTFFAVNVS (94 aa). The cysteines at positions 54 and 100 are disulfide-linked. N-linked (GlcNAc...) asparagine glycosylation is found at Asn-76 and Asn-116. Residues 118–152 are disordered; that stretch reads SDRIPSVEDDDDDDEKSSSEEKEAENSKPNPVAPF. Basic and acidic residues predominate over residues 133–143; that stretch reads KSSSEEKEAEN. Ig-like C2-type domains follow at residues 156–244 and 253–355; these read PEKM…YQLD and PILQ…AWLT. An intrachain disulfide couples Cys-176 to Cys-228. N-linked (GlcNAc...) asparagine glycosylation is found at Asn-238, Asn-262, Asn-294, Asn-315, and Asn-328. Cys-275 and Cys-339 are oxidised to a cystine. The helical transmembrane segment at 375–395 threads the bilayer; that stretch reads IIIYCTGAFLISCMLVTVIIY. The Cytoplasmic segment spans residues 396-816; the sequence is KMKNTTKKTD…QHANGGLKKR (421 aa). Residue Tyr-459 is modified to Phosphotyrosine; by autocatalysis. One can recognise a Protein kinase domain in the interval 474-763; the sequence is LILGKPLGEG…VAMTSNQEYL (290 aa). ATP-binding positions include 480–486, Lys-510, 558–560, and Asn-564; these read LGEGCFG and EYA. Tyr-579 and Tyr-581 each carry phosphotyrosine; by autocatalysis. Catalysis depends on Asp-619, which acts as the Proton acceptor. ATP-binding residues include Arg-623 and Asp-637. Phosphotyrosine; by autocatalysis occurs at positions 649, 650, 726, and 762. The disordered stretch occupies residues 776–816; sequence FPDTRSSTCSSGEDSVFSHDPLPDEPCLPKYQHANGGLKKR. A compositionally biased stretch (polar residues) spans 779–788; the sequence is TRSSTCSSGE.

This sequence belongs to the protein kinase superfamily. Tyr protein kinase family. Fibroblast growth factor receptor subfamily. Monomer. Homodimer after ligand binding. Autophosphorylated. Binding of FGF family members together with heparan sulfate proteoglycan or heparin promotes receptor dimerization and autophosphorylation on tyrosine residues. Autophosphorylation occurs in trans between the two FGFR molecules present in the dimer and proceeds in a highly ordered manner. Phosphotyrosine residues provide docking sites for interacting proteins and so are crucial for FGFR1 function and its regulation. In terms of processing, ubiquitinated. FGFR1 is rapidly ubiquitinated after autophosphorylation, leading to internalization and degradation. Post-translationally, N-glycosylated in the endoplasmic reticulum. The N-glycan chains undergo further maturation to an Endo H-resistant form in the Golgi apparatus.

Its subcellular location is the cell membrane. The protein resides in the nucleus. It is found in the cytoplasm. The protein localises to the cytosol. It localises to the cytoplasmic vesicle. The enzyme catalyses L-tyrosyl-[protein] + ATP = O-phospho-L-tyrosyl-[protein] + ADP + H(+). Its activity is regulated as follows. Present in an inactive conformation in the absence of bound ligand. Ligand binding leads to dimerization and activation by sequential autophosphorylation on tyrosine residues. Tyrosine-protein kinase that acts as a cell-surface receptor for fibroblast growth factors and plays an essential role in the regulation of embryonic development, cell proliferation, differentiation and migration. Required for normal mesoderm patterning and normal skeletogenesis. Phosphorylates PLCG1, FRS2, GAB1 and SHB. Ligand binding leads to the activation of several signaling cascades. Activation of PLCG1 leads to the production of the cellular signaling molecules diacylglycerol and inositol-1,4,5-trisphosphate. Phosphorylation of FRS2 triggers recruitment of GRB2, GAB1, PIK3R1 and SOS1, and mediates activation of RAS, MAPK1/ERK2, MAPK3/ERK1 and the MAP kinase signaling pathway, as well as of the AKT1 signaling pathway. Promotes phosphorylation of SHC1, STAT1 and PTPN11/SHP2. In the nucleus, enhances RPS6KA1 and CREB1 activity and contributes to the regulation of transcription. FGFR1 signaling is down-regulated by ubiquitination, internalization and degradation. The polypeptide is Fibroblast growth factor receptor 1 (FGFR1) (Pleurodeles waltl (Iberian ribbed newt)).